Reading from the N-terminus, the 492-residue chain is 3-octaprenyl-4-hydroxybenzoate carboxy-lyase (492 aa).

Residue Asn177 coordinates Mn(2+). Residues 180–182 (IYR), 194–196 (RWL), and 199–200 (RG) each bind prenylated FMN. Glu243 lines the Mn(2+) pocket. Residue Asp292 is the Proton donor of the active site.

Belongs to the UbiD family. In terms of assembly, homohexamer. Prenylated FMN is required as a cofactor. Requires Mn(2+) as cofactor.

It localises to the cell membrane. The catalysed reaction is a 4-hydroxy-3-(all-trans-polyprenyl)benzoate + H(+) = a 2-(all-trans-polyprenyl)phenol + CO2. It functions in the pathway cofactor biosynthesis; ubiquinone biosynthesis. Functionally, catalyzes the decarboxylation of 3-octaprenyl-4-hydroxy benzoate to 2-octaprenylphenol, an intermediate step in ubiquinone biosynthesis. This is 3-octaprenyl-4-hydroxybenzoate carboxy-lyase from Neisseria gonorrhoeae (strain ATCC 700825 / FA 1090).